A 467-amino-acid polypeptide reads, in one-letter code: ADP-dependent glucose/glucosamine kinase (467 aa).

Residues R10 to R467 enclose the ADPK domain. D-glucose contacts are provided by residues D42, E96, G120, G120–Q121, H184, and D211. A Mg(2+)-binding site is contributed by E279. An ADP-binding site is contributed by N305. Position 308 (E308) interacts with Mg(2+). ADP contacts are provided by residues H352–T353, V440, and G450. A D-glucose-binding site is contributed by D451. Residue D451 coordinates Mg(2+). Catalysis depends on D451, which acts as the Proton acceptor.

It belongs to the ADP-dependent glucokinase family. Monomer. The cofactor is Mg(2+).

It is found in the cytoplasm. The enzyme catalyses D-glucose + ADP = D-glucose 6-phosphate + AMP + H(+). It catalyses the reaction D-glucosamine + ADP = D-glucosamine 6-phosphate + AMP + H(+). Its pathway is carbohydrate degradation; glycolysis. In terms of biological role, catalyzes the ADP-dependent phosphorylation of D-glucose to D-glucose 6-phosphate and glucosamine to glucosamine 6-phosphate. Can also use CDP as the phosphoryl group donor and D-1,5-anhydroglucitol as the phosphoryl group acceptor. The chain is ADP-dependent glucose/glucosamine kinase from Thermococcus litoralis (strain ATCC 51850 / DSM 5473 / JCM 8560 / NS-C).